The following is a 360-amino-acid chain: 3-dehydroquinate synthase (360 aa).

Residues 70 to 75 (DGEKYK), 104 to 108 (GVIGD), 128 to 129 (TT), lysine 141, and lysine 150 contribute to the NAD(+) site. Residues glutamate 183, histidine 246, and histidine 263 each contribute to the Zn(2+) site.

The protein belongs to the sugar phosphate cyclases superfamily. Dehydroquinate synthase family. It depends on Co(2+) as a cofactor. The cofactor is Zn(2+). NAD(+) serves as cofactor.

The protein localises to the cytoplasm. The catalysed reaction is 7-phospho-2-dehydro-3-deoxy-D-arabino-heptonate = 3-dehydroquinate + phosphate. It functions in the pathway metabolic intermediate biosynthesis; chorismate biosynthesis; chorismate from D-erythrose 4-phosphate and phosphoenolpyruvate: step 2/7. Functionally, catalyzes the conversion of 3-deoxy-D-arabino-heptulosonate 7-phosphate (DAHP) to dehydroquinate (DHQ). This is 3-dehydroquinate synthase from Acinetobacter baumannii (strain SDF).